Reading from the N-terminus, the 554-residue chain is MTAPCSQPAQLPGRRQLGLVPFPPPPPRTPLLWLLLLLLAAVAPARGWESGDLELFDLVEEVQLNFYQFLGVQQDASSADIRKAYRKLSLTLHPDKNKDENAETQFRQLVAIYEVLKDDERRQRYDDILINGLPDWRQPVFYYRRVRKMSNAELALLLFIILTVGHYAVVWSIYLEKQLDELLSRKKREKKKKTGSKSVDVSKLGASEKNERLLMKPQWHDLLPCKLGIWFCLTLKALPHLIQDAGQFYAKYKETRLKEKEDALTRTELETLQKQKKVKKPKPEFPVYTPLETTYIQSYDHGTSIEEIEEQMDDWLENRNRTQKKQAPEWTEEDLSQLTRSMVKFPGGTPGRWEKIAHELGRSVTDVTTKAKQLKDSVTCSPGMVRLSELKSTVQNSRPIKTATTLPDDMITQREDAEGVAAEEEQEGDSGEQETGATDARPRRRKPARLLEATAKPEPEEKSRAKRQKDFDIAEQNESSDEESLRKERARSAEEPWTQNQQKLLELALQQYPRGSSDRWDKIARCVPSKSKEDCIARYKLLVELVQKKKQAKS.

Residues 1 to 47 form the signal peptide; it reads MTAPCSQPAQLPGRRQLGLVPFPPPPPRTPLLWLLLLLLAAVAPARG. Residues 48–153 lie on the Lumenal side of the membrane; sequence WESGDLELFD…RRVRKMSNAE (106 aa). Residues 65–129 enclose the J domain; that stretch reads NFYQFLGVQQ…ERRQRYDDIL (65 aa). The helical transmembrane segment at 154–174 threads the bilayer; it reads LALLLFIILTVGHYAVVWSIY. The Cytoplasmic portion of the chain corresponds to 175–554; that stretch reads LEKQLDELLS…LVQKKKQAKS (380 aa). The SANT 1 domain maps to 325-379; it reads KQAPEWTEEDLSQLTRSMVKFPGGTPGRWEKIAHELGRSVTDVTTKAKQLKDSVT. Serine 381 carries the post-translational modification Phosphoserine. Polar residues predominate over residues 392-405; that stretch reads STVQNSRPIKTATT. The segment at 392-500 is disordered; that stretch reads STVQNSRPIK…RSAEEPWTQN (109 aa). Over residues 421 to 432 the composition is skewed to acidic residues; it reads AAEEEQEGDSGE. Residue serine 430 is modified to Phosphoserine. The span at 455–472 shows a compositional bias: basic and acidic residues; that stretch reads AKPEPEEKSRAKRQKDFD. Over residues 473-482 the composition is skewed to acidic residues; sequence IAEQNESSDE. A phosphoserine mark is found at serine 479, serine 480, serine 484, and serine 492. Residues 483 to 494 are compositionally biased toward basic and acidic residues; that stretch reads ESLRKERARSAE. The SANT 2 domain maps to 492–547; it reads SAEEPWTQNQQKLLELALQQYPRGSSDRWDKIARCVPSKSKEDCIARYKLLVELVQ.

In terms of assembly, interacts (via J domain) with HSPA5. Interacts (via cytosolic domain) with ribosomes. Interacts (via SANT 2 domain) with SERPINA3; the interaction delays the formation of the covalent inhibitory complex SERPINA3-chymotrypsin, but does not alter the catalytic activity of SERPINA3. Interacts (via SANT 2 domain) with ITIH4 (via C-terminus); the interaction protects ITIH4 against in vitro cleavage by kallikrein.

It localises to the endoplasmic reticulum membrane. The protein localises to the nucleus membrane. It is found in the microsome membrane. Functionally, may modulate protein synthesis. The chain is DnaJ homolog subfamily C member 1 (DNAJC1) from Homo sapiens (Human).